We begin with the raw amino-acid sequence, 209 residues long: MTAELEAQARTEKTRSFTHSLREKGMIPAVVYGKNVGSLSIAVDAGELQKILEGAGSNALIRMKIKENGKIRKHNVLVKEVQRDPVRRELIHADFHQVSLKDRVHATVPVHLTGSAAGTVEGGVLTPLLRRVEMECLASEIPEAITVDVSGLRIGDTITVADLPLPPGVRALEDPEAPVVTVTAGERPAAEPAAAPGAAPAAGPEEAEE.

A disordered region spans residues 183-209 (TAGERPAAEPAAAPGAAPAAGPEEAEE). A compositionally biased stretch (low complexity) spans 184 to 209 (AGERPAAEPAAAPGAAPAAGPEEAEE).

Belongs to the bacterial ribosomal protein bL25 family. CTC subfamily. Part of the 50S ribosomal subunit; part of the 5S rRNA/L5/L18/L25 subcomplex. Contacts the 5S rRNA. Binds to the 5S rRNA independently of L5 and L18.

This is one of the proteins that binds to the 5S RNA in the ribosome where it forms part of the central protuberance. The sequence is that of Large ribosomal subunit protein bL25 from Pelotomaculum thermopropionicum (strain DSM 13744 / JCM 10971 / SI).